Reading from the N-terminus, the 235-residue chain is Phosphoribosylaminoimidazole-succinocarboxamide synthase (235 aa).

This sequence belongs to the SAICAR synthetase family.

The enzyme catalyses 5-amino-1-(5-phospho-D-ribosyl)imidazole-4-carboxylate + L-aspartate + ATP = (2S)-2-[5-amino-1-(5-phospho-beta-D-ribosyl)imidazole-4-carboxamido]succinate + ADP + phosphate + 2 H(+). The protein operates within purine metabolism; IMP biosynthesis via de novo pathway; 5-amino-1-(5-phospho-D-ribosyl)imidazole-4-carboxamide from 5-amino-1-(5-phospho-D-ribosyl)imidazole-4-carboxylate: step 1/2. The polypeptide is Phosphoribosylaminoimidazole-succinocarboxamide synthase (Exiguobacterium sibiricum (strain DSM 17290 / CCUG 55495 / CIP 109462 / JCM 13490 / 255-15)).